The primary structure comprises 692 residues: Epithelial sodium channel subunit alpha (692 aa).

Residues 1–67 are disordered; it reads MSSIKGNKLE…PAAPQQPTAE (67 aa). At 1-108 the chain is on the cytoplasmic side; that stretch reads MSSIKGNKLE…CSQHNRMKTA (108 aa). Residues 56 to 65 show a composition bias toward low complexity; that stretch reads PEPAAPQQPT. Residues 109 to 129 traverse the membrane as a helical segment; that stretch reads FWAVLWLCTFGMMYWQFGLLF. Over 130–585 the chain is Extracellular; sequence GEYFSYPVSL…SQWSLWFGSS (456 aa). Cystine bridges form between C156/C328, C252/C259, C305/C312, C417/C502, C439/C479, C439/C498, C443/C494, C452/C479, C452/C502, and C454/C468. The tract at residues 198–266 is gating release of inhibition by proteolysis (GRIP); protease-sensitive region that is responsible for the proteolytic activation of the channel; the sequence is RSRRDLRGTL…SDCFYQTYSS (69 aa). Residues 586–606 traverse the membrane as a helical segment; it reads VLSVVEMAELIFDLLVITFLM. Over 607-692 the chain is Cytoplasmic; sequence LLRRFRSRYW…GSSACPLGGP (86 aa). Residues 627–692 form a disordered region; it reads EVASTLASSP…GSSACPLGGP (66 aa). Residues 628–637 are compositionally biased toward polar residues; the sequence is VASTLASSPP. Positions 653 to 666 are enriched in pro residues; it reads GPAPSPALTAPPPA. Residues 663–667 carry the PY motif; recruits WW domain-containing proteins and is thereby required for ubiquitination and inhibition of the channel by NEDD4 and NEDD4L motif; that stretch reads PPPAY. Over residues 682-692 the composition is skewed to low complexity; that stretch reads AGSSACPLGGP.

This sequence belongs to the amiloride-sensitive sodium channel (TC 1.A.6) family. SCNN1A subfamily. In terms of assembly, heterotrimer; containing an alpha/SCNN1A, a beta/SCNN1B and a gamma/SCNN1G subunit. Interacts with WWP1 (via WW domains). Interacts with WWP2 (via WW domains); inhibits the channel. Interacts with BPIFA1; the interaction is indirect via SCNN1B and inhibits the proteolytic processing of SCNN1A and SCNN1G and the activation of ENaC. Interacts with the full-length immature form of PCSK9 (pro-PCSK9). Post-translationally, ubiquitinated. Can be ubiquitinated at multiple sites and undergo monoubiquitination and polyubiquitination. Ubiquitination by NEDD4 or NEDD4L inhibits the ENaC channel through endocytosis, intracellular retention and degradation of its individual subunits. In terms of processing, N-glycosylated. ENaC is activated through the proteolytic maturation of its subunits. Furin cleaves the SCNN1A subunit, which results in a stepwise increase in the open probability of the channel due to the release of an inhibitory tract. BPIFA1, which is recruited by the SCNN1B subunit, prevents the proteolytic activation of ENaC.

It localises to the apical cell membrane. The protein resides in the cell projection. It is found in the cilium. The protein localises to the cytoplasmic granule. Its subcellular location is the cytoplasm. It localises to the cytoplasmic vesicle. The protein resides in the secretory vesicle. It is found in the acrosome. The protein localises to the flagellum. It catalyses the reaction Na(+)(in) = Na(+)(out). Originally identified and characterized by its inhibition by the diuretic drug amiloride. Functionally, this is one of the three pore-forming subunits of the heterotrimeric epithelial sodium channel (ENaC), a critical regulator of sodium balance and fluid homeostasis. ENaC operates in epithelial tissues, where it mediates the electrodiffusion of sodium ions from extracellular fluid through the apical membrane of cells, with water following osmotically. It plays a key role in maintaining sodium homeostasis through electrogenic sodium reabsorption in the kidneys. Additionally, ENaC is essential for airway surface liquid homeostasis, which is crucial for proper mucus clearance. This Pan troglodytes (Chimpanzee) protein is Epithelial sodium channel subunit alpha.